Here is a 547-residue protein sequence, read N- to C-terminus: Solute carrier family 22 member 25 (547 aa).

The Cytoplasmic portion of the chain corresponds to 1–9 (MAFQDLLDQ). A helical transmembrane segment spans residues 10 to 30 (VGGLGRFQILQMVFLIMFNVI). Residues 31–145 (VYHQTQLENF…DLVCESQPLN (115 aa)) are Extracellular-facing. Asparagine 56 and asparagine 102 each carry an N-linked (GlcNAc...) asparagine glycan. Residues 146–166 (SVAKFLFMAGMMVGGNLYGHL) traverse the membrane as a helical segment. Residues 167-177 (SDRFGRKFVLR) are Cytoplasmic-facing. A helical membrane pass occupies residues 178–198 (WSYLQLAIVGTCAAFAPTILV). The Extracellular portion of the chain corresponds to 199–204 (YCSLRF). Residues 205–225 (LAGAATFSIIVNTVLLIVEWI) form a helical membrane-spanning segment. The Cytoplasmic portion of the chain corresponds to 226-234 (THQFCAMAL). A helical membrane pass occupies residues 235 to 255 (TLTLCAASIGHITLGSLAFVI). Over 256-259 (RDQC) the chain is Extracellular. Residues 260–280 (ILQLVMSAPCFVFFLFSRWLA) traverse the membrane as a helical segment. At 281–349 (ESARWLIINN…LLRIPNICKR (69 aa)) the chain is on the cytoplasmic side. A helical transmembrane segment spans residues 350–370 (ICFLSFVRFASTIPFWGLTLH). Residues 371–377 (LQHLGNN) lie on the Extracellular side of the membrane. The chain crosses the membrane as a helical span at residues 378-398 (VFLLQTLFGAVTLLANCVAPW). At 399-406 (ALNHMSRR) the chain is on the cytoplasmic side. Residues 407 to 427 (LSQMLLMFLLATCLLAIIFVP) form a helical membrane-spanning segment. At 428-434 (QEMQTLR) the chain is on the extracellular side. A helical transmembrane segment spans residues 435–455 (VVLATLGVGAASLGITCSTAQ). The Cytoplasmic segment spans residues 456–470 (ENELIPSIIRGRATG). A helical membrane pass occupies residues 471–491 (ITGNFANIGGALASLMMILSI). Topologically, residues 492–494 (YSR) are extracellular. A helical transmembrane segment spans residues 495-515 (PLPWIIYGVFAILSGLVVLLL). The Cytoplasmic segment spans residues 516-547 (PETRNQPLLDSIQDVENEGVNSLAAPQRSSVL).

It belongs to the major facilitator (TC 2.A.1) superfamily. Organic cation transporter (TC 2.A.1.19) family. As to expression, expressed exclusively in liver in both embryo and adult.

The protein resides in the membrane. In Homo sapiens (Human), this protein is Solute carrier family 22 member 25.